The primary structure comprises 104 residues: uncharacterized protein (104 aa).

One can recognise an HIT domain in the interval 3 to 104 (VFEKIIQGEI…HFHILSGDKH (102 aa)). A Histidine triad motif motif is present at residues 93-97 (HLHFH).

This is an uncharacterized protein from Helicobacter pylori (strain J99 / ATCC 700824) (Campylobacter pylori J99).